The chain runs to 215 residues: MKALLLGAPGAGKGTQAQFITAAFGIPQISTGDMLRAAIKAGTPLGLEAKKIIDEGGLVRDDIIIGMVKERIAQDDCKNGFLFDGFPRTLAQAEAMVEAGVDLDAVVEIDVPDSVIVDRMSGRRVHLASGRTYHVTYNPPKVEGKDDVTGEDLIQRDDDKEETVKKRLAVYHEQTEVLVDFYSKLEGEHAPKYIKVDGTQAVEAVKAEVLGALGK.

Residue 10-15 (GAGKGT) coordinates ATP. Residues 30–59 (STGDMLRAAIKAGTPLGLEAKKIIDEGGLV) form an NMP region. AMP-binding positions include Thr31, Arg36, 57 to 59 (GLV), 85 to 88 (GFPR), and Gln92. The segment at 122 to 159 (GRRVHLASGRTYHVTYNPPKVEGKDDVTGEDLIQRDDD) is LID. ATP contacts are provided by residues Arg123 and 132–133 (TY). The AMP site is built by Arg156 and Arg167. Position 200 (Gln200) interacts with ATP.

This sequence belongs to the adenylate kinase family. As to quaternary structure, monomer.

It is found in the cytoplasm. The enzyme catalyses AMP + ATP = 2 ADP. It participates in purine metabolism; AMP biosynthesis via salvage pathway; AMP from ADP: step 1/1. In terms of biological role, catalyzes the reversible transfer of the terminal phosphate group between ATP and AMP. Plays an important role in cellular energy homeostasis and in adenine nucleotide metabolism. This Neisseria meningitidis serogroup B (strain ATCC BAA-335 / MC58) protein is Adenylate kinase.